The following is a 1636-amino-acid chain: Tyrosine-protein phosphatase non-receptor type 23 (1636 aa).

The BRO1 domain occupies Pro-8–Leu-394. 2 TPR repeats span residues Ala-250–Ala-283 and Glu-374–Thr-407. Residues Lys-550 to Gln-623 adopt a coiled-coil conformation. Residues Glu-701–Lys-714 are compositionally biased toward basic and acidic residues. Disordered regions lie at residues Glu-701 to Ala-812 and Gln-888 to Gly-1151. The residue at position 733 (Ser-733) is a Phosphoserine. Residues His-770 to Gly-1130 form a his region. Pro residues-rich tracts occupy residues Arg-898–Tyr-922 and Arg-950–His-962. Arg-950 is subject to Omega-N-methylarginine. A run of 6 repeats spans residues Pro-953–Gln-954, Pro-955–Gln-956, Pro-957–His-958, Pro-959–Gln-960, Pro-961–His-962, and Pro-963–Ser-964. The segment at Pro-953 to Ser-964 is 6 X 2 AA approximate tandem repeats of P-Q. 3 stretches are compositionally biased toward pro residues: residues Leu-983–Pro-1002, Phe-1036–Ala-1050, and His-1083–Cys-1109. Over residues Leu-1120 to Thr-1131 the composition is skewed to polar residues. Phosphoserine occurs at positions 1122 and 1123. Thr-1131 carries the post-translational modification Phosphothreonine. The 261-residue stretch at Asp-1192–His-1452 folds into the Tyrosine-protein phosphatase domain. Cys-1392 serves as the catalytic Phosphocysteine intermediate. Residues Leu-1513 to Thr-1636 form a disordered region. 2 stretches are compositionally biased toward pro residues: residues Pro-1523–Ser-1533 and Ser-1542–Pro-1556. Positions Ala-1567 to Ala-1587 are enriched in low complexity. The residue at position 1615 (Arg-1615) is an Omega-N-methylarginine.

The protein belongs to the protein-tyrosine phosphatase family. Non-receptor class subfamily. Interacts with GRAP2 and GRB2. Interacts with UBAP1. Interacts with CHMP4B.

It localises to the nucleus. The protein localises to the cytoplasm. The protein resides in the cytoplasmic vesicle. It is found in the endosome. Its subcellular location is the cytoskeleton. It localises to the cilium basal body. The protein localises to the early endosome. It catalyses the reaction O-phospho-L-tyrosyl-[protein] + H2O = L-tyrosyl-[protein] + phosphate. Its function is as follows. Plays a role in sorting of endocytic ubiquitinated cargos into multivesicular bodies (MVBs) via its interaction with the ESCRT-I complex (endosomal sorting complex required for transport I), and possibly also other ESCRT complexes. May act as a negative regulator of Ras-mediated mitogenic activity. Plays a role in ciliogenesis. The sequence is that of Tyrosine-protein phosphatase non-receptor type 23 (PTPN23) from Homo sapiens (Human).